The sequence spans 313 residues: E3 ubiquitin-protein ligase RNF126 (313 aa).

Position 2 is an N-acetylalanine (alanine 2). The residue at position 5 (serine 5) is a Phosphoserine. Residues 5-101 form a required for interaction with BAG6 region; sequence SPQPGRYFCH…FEIPTFPPGA (97 aa). Zn(2+)-binding residues include cysteine 13, cysteine 16, cysteine 29, and cysteine 32. The C4-type zinc finger occupies 13–32; it reads CHCCSVEIVPRLPDYICPRC. Disordered regions lie at residues 42-64 and 96-128; these read EETR…SRQQ and TFPP…ARQP. The span at 47-64 shows a compositional bias: polar residues; sequence AENGSAPSTASADQSRQQ. Residues 104-117 show a composition bias toward basic and acidic residues; sequence DDSRDPESRREREQ. The span at 118 to 128 shows a compositional bias: basic residues; that stretch reads HSRHRYGARQP. The tract at residues 203 to 306 is sufficient for interaction with AICDA; sequence TGPPPADKEK…SSSSSSSPGN (104 aa). The RING-type zinc-finger motif lies at 232–273; it reads CPVCKDDYGLGEHVRQLPCNHLFHDGCIVPWLEQHDSCPVCR. A disordered region spans residues 280-313; it reads NTATDPPGLAGVSFSSSSSSSSSSPGNENPASSS. Residues 292–313 show a composition bias toward low complexity; that stretch reads SFSSSSSSSSSSPGNENPASSS.

In terms of assembly, interacts with CCDC50, EGFR, FLT3 and SCAMP3. Interacts with BAG6 (via ubiquitin-like domain); required for BAG6-dependent ubiquitination of proteins mislocalized to the cytosol. Interacts with CDKN1A. Interacts with AICDA. Post-translationally, ubiquitinated. May undergo autoubiquitination.

It is found in the cytoplasm. It localises to the nucleus. It catalyses the reaction S-ubiquitinyl-[E2 ubiquitin-conjugating enzyme]-L-cysteine + [acceptor protein]-L-lysine = [E2 ubiquitin-conjugating enzyme]-L-cysteine + N(6)-ubiquitinyl-[acceptor protein]-L-lysine.. It functions in the pathway protein modification; protein ubiquitination. Its function is as follows. E3 ubiquitin-protein ligase that mediates ubiquitination oF target proteins. Depending on the associated E2 ligase, mediates 'Lys-27'-, 'Lys-29'-, 'Lys-48'- and/or 'Lys-63'-linked polyubiquitination of substrates. Part of a BAG6-dependent quality control process ensuring that proteins of the secretory pathway that are mislocalized to the cytosol are degraded by the proteasome. Probably acts by providing the ubiquitin ligase activity associated with the BAG6 complex and be responsible for ubiquitination of the hydrophobic mislocalized proteins and their targeting to the proteasome. May also play a role in the endosomal recycling of IGF2R, the cation-independent mannose-6-phosphate receptor. May play a role in the endosomal sorting and degradation of several membrane receptors including EGFR, FLT3, MET and CXCR4, by mediating their ubiquitination. By ubiquitinating CDKN1A/p21 and targeting it for degradation, may also promote cell proliferation. May monoubiquitinate AICDA. Acts as a regulator of DNA repair by mediating 'Lys-27'- and 'Lys-29'-linked polyubiquitination of MRE11, thereby promoting the exonuclease activity of MRE11. The chain is E3 ubiquitin-protein ligase RNF126 from Bos taurus (Bovine).